The primary structure comprises 254 residues: Pre-miRNA 5'-monophosphate methyltransferase (254 aa).

The region spanning 34 to 254 is the Bin3-type SAM domain; sequence ENRLSLIPEA…DRSLLLFRRQ (221 aa). S-adenosyl-L-methionine-binding positions include arginine 36, asparagine 66, aspartate 99, and 124–125; that span reads DI.

Belongs to the methyltransferase superfamily.

Its subcellular location is the cytoplasm. The catalysed reaction is a 5'-end 5'-phospho-ribonucleoside-RNA + S-adenosyl-L-methionine = a 5'-end (5'-methylphospho)-ribonucleoside-RNA + S-adenosyl-L-homocysteine. It carries out the reaction a 5'-end 5'-phospho-ribonucleoside-RNA + 2 S-adenosyl-L-methionine = a 5'-end (5'-bismethylphospho)-ribonucleoside-RNA + 2 S-adenosyl-L-homocysteine. O-methyltransferase that specifically monomethylates 5'-monophosphate of cytoplasmic histidyl tRNA (tRNA(His)), acting as a capping enzyme by protecting tRNA(His) from cleavage by DICER1. Also able, with less efficiently, to methylate the 5' monophosphate of a subset of pre-miRNAs, acting as a negative regulator of miRNA processing. The 5' monophosphate of pre-miRNAs is recognized by DICER1 and is required for pre-miRNAs processing: methylation at this position reduces the processing of pre-miRNAs by DICER1. Was also reported to mediate dimethylation of pre-miR-145; however dimethylation cannot be reproduced by another group which observes a monomethylation of pre-miR-145. The chain is Pre-miRNA 5'-monophosphate methyltransferase (bcdin3d) from Danio rerio (Zebrafish).